Consider the following 457-residue polypeptide: Multidrug resistance protein MdtK (457 aa).

12 helical membrane-spanning segments follow: residues 11 to 31 (LLAL…MGFV), 53 to 73 (IWLP…PVIA), 93 to 113 (WLAG…GYII), 127 to 147 (AVGY…FQVA), 160 to 180 (GMVM…IFIY), 188 to 208 (LGGI…FIAM), 243 to 263 (LPIA…ALLV), 276 to 296 (IALN…AAVT), 314 to 334 (AART…IFTV), 350 to 370 (VVAL…SDSI), 387 to 407 (IFFI…YILA), and 418 to 438 (PAGF…LMML).

It belongs to the multi antimicrobial extrusion (MATE) (TC 2.A.66.1) family. MdtK subfamily.

It is found in the cell inner membrane. Its function is as follows. Multidrug efflux pump that functions probably as a Na(+)/drug antiporter. This is Multidrug resistance protein MdtK from Salmonella enteritidis PT4 (strain P125109).